An 81-amino-acid chain; its full sequence is Costars family protein ABRACL (81 aa).

An N-acetylmethionine modification is found at Met1.

The protein belongs to the costars family.

This is Costars family protein ABRACL (ABRACL) from Homo sapiens (Human).